Consider the following 308-residue polypeptide: Probable GTP 3',8-cyclase (308 aa).

The Radical SAM core domain occupies Arg4 to Arg222. GTP is bound at residue Arg13. Residues Cys20, Cys24, and Cys27 each contribute to the [4Fe-4S] cluster site. Lys60 contacts GTP. S-adenosyl-L-methionine is bound at residue Gly64. A GTP-binding site is contributed by Thr90. Ser114 provides a ligand contact to S-adenosyl-L-methionine. Residue Lys151 participates in GTP binding. [4Fe-4S] cluster contacts are provided by Cys245 and Cys248. Residue Arg250 to Arg252 participates in GTP binding. Cys262 contributes to the [4Fe-4S] cluster binding site.

This sequence belongs to the radical SAM superfamily. MoaA family. It depends on [4Fe-4S] cluster as a cofactor.

It carries out the reaction GTP + AH2 + S-adenosyl-L-methionine = (8S)-3',8-cyclo-7,8-dihydroguanosine 5'-triphosphate + 5'-deoxyadenosine + L-methionine + A + H(+). It functions in the pathway cofactor biosynthesis; molybdopterin biosynthesis. In terms of biological role, catalyzes the cyclization of GTP to (8S)-3',8-cyclo-7,8-dihydroguanosine 5'-triphosphate. The polypeptide is Probable GTP 3',8-cyclase (Saccharolobus solfataricus (strain ATCC 35092 / DSM 1617 / JCM 11322 / P2) (Sulfolobus solfataricus)).